The following is a 271-amino-acid chain: Bifunctional protein FolD (271 aa).

Residues Gly154–Ser156, Thr181, and Ile222 contribute to the NADP(+) site.

This sequence belongs to the tetrahydrofolate dehydrogenase/cyclohydrolase family. As to quaternary structure, homodimer.

It catalyses the reaction (6R)-5,10-methylene-5,6,7,8-tetrahydrofolate + NADP(+) = (6R)-5,10-methenyltetrahydrofolate + NADPH. It carries out the reaction (6R)-5,10-methenyltetrahydrofolate + H2O = (6R)-10-formyltetrahydrofolate + H(+). It participates in one-carbon metabolism; tetrahydrofolate interconversion. Catalyzes the oxidation of 5,10-methylenetetrahydrofolate to 5,10-methenyltetrahydrofolate and then the hydrolysis of 5,10-methenyltetrahydrofolate to 10-formyltetrahydrofolate. The polypeptide is Bifunctional protein FolD (Thermosipho melanesiensis (strain DSM 12029 / CIP 104789 / BI429)).